A 123-amino-acid polypeptide reads, in one-letter code: Small ribosomal subunit protein uS13 (123 aa).

A disordered region spans residues 97–123 (PCRGQRTHTNSRTRKGPRRGVMAKKKK).

This sequence belongs to the universal ribosomal protein uS13 family. Part of the 30S ribosomal subunit. Forms a loose heterodimer with protein S19. Forms two bridges to the 50S subunit in the 70S ribosome.

In terms of biological role, located at the top of the head of the 30S subunit, it contacts several helices of the 16S rRNA. In the 70S ribosome it contacts the 23S rRNA (bridge B1a) and protein L5 of the 50S subunit (bridge B1b), connecting the 2 subunits; these bridges are implicated in subunit movement. Contacts the tRNAs in the A and P-sites. The polypeptide is Small ribosomal subunit protein uS13 (Solidesulfovibrio magneticus (strain ATCC 700980 / DSM 13731 / RS-1) (Desulfovibrio magneticus)).